A 363-amino-acid chain; its full sequence is Peptide-N(4)-(N-acetyl-beta-glucosaminyl)asparagine amidase (363 aa).

Residues C129, C132, C165, and C168 each coordinate Zn(2+). Catalysis depends on C191, which acts as the Nucleophile. Active-site residues include H218 and D235. A substrate-binding site is contributed by E238. The disordered stretch occupies residues 325 to 363 (RGKTQETKSESVSAASKSSNRGRESGSADWKAQRGEDGK). Residues 334–343 (ESVSAASKSS) show a composition bias toward low complexity. Positions 345-363 (RGRESGSADWKAQRGEDGK) are enriched in basic and acidic residues.

The protein belongs to the transglutaminase-like superfamily. PNGase family. Interacts with RAD23 subunit of 26S proteasome. The cofactor is Zn(2+).

The protein resides in the cytoplasm. It is found in the nucleus. The enzyme catalyses Hydrolysis of an N(4)-(acetyl-beta-D-glucosaminyl)asparagine residue in which the glucosamine residue may be further glycosylated, to yield a (substituted) N-acetyl-beta-D-glucosaminylamine and a peptide containing an aspartate residue.. With respect to regulation, inhibited by Z-VAD-fmk, a well-known caspase inhibitor. Also inhibited by Man9GlcNAc2-iodoacetoamide. Both molecules inhibit enzyme activity through covalent binding of the carbohydrate to the single Cys-191 residue. Specifically deglycosylates the denatured form of N-linked glycoproteins in the cytoplasm and assists their proteasome-mediated degradation. Cleaves the beta-aspartyl-glucosamine (GlcNAc) of the glycan and the amide side chain of Asn, converting Asn to Asp. Prefers proteins containing high-mannose over those bearing complex type oligosaccharides. Can recognize misfolded proteins in the endoplasmic reticulum that are exported to the cytosol to be destroyed and deglycosylate them, while it has no activity toward native proteins. Deglycosylation is a prerequisite for subsequent proteasome-mediated degradation of some, but not all, misfolded glycoproteins. Involved in the formation of free oligosaccharide in cytosol. This Saccharomyces cerevisiae (strain ATCC 204508 / S288c) (Baker's yeast) protein is Peptide-N(4)-(N-acetyl-beta-glucosaminyl)asparagine amidase (PNG1).